Here is a 161-residue protein sequence, read N- to C-terminus: Transcription elongation factor GreA (161 aa).

Residues 8–28 (LTQEGFKQLEKELENLIQVKR) are a coiled coil.

The protein belongs to the GreA/GreB family.

Its function is as follows. Necessary for efficient RNA polymerase transcription elongation past template-encoded arresting sites. The arresting sites in DNA have the property of trapping a certain fraction of elongating RNA polymerases that pass through, resulting in locked ternary complexes. Cleavage of the nascent transcript by cleavage factors such as GreA or GreB allows the resumption of elongation from the new 3'terminus. GreA releases sequences of 2 to 3 nucleotides. The sequence is that of Transcription elongation factor GreA from Mycoplasma genitalium (strain ATCC 33530 / DSM 19775 / NCTC 10195 / G37) (Mycoplasmoides genitalium).